The following is a 201-amino-acid chain: Ras-related protein Rab-9A (201 aa).

An N-acetylalanine modification is found at Ala2. Residues Gly17, Val18, Gly19, Lys20, Ser21, Ser22, Ser34, His38, and Thr39 each coordinate GTP. Residue Ser21 coordinates Mg(2+). The Switch 1 signature appears at 31-42 (KFDSQLFHTIGV). Ser34 bears the Phosphoserine mark. Mg(2+) contacts are provided by Thr39 and Asp62. The Switch 2 signature appears at 64–78 (AGQERFRSLRTPFYR). GTP-binding residues include Gly65, Asn124, Lys125, Asp127, and Lys156. Ser179 is modified (phosphoserine). Thr187 carries the post-translational modification Phosphothreonine. 2 S-geranylgeranyl cysteine lipidation sites follow: Cys200 and Cys201.

It belongs to the small GTPase superfamily. Rab family. As to quaternary structure, interacts (preferentially in its GTP-bound form) with GCC2 (via its GRIP domain). Interacts (GTP-bound form) with SGSM1; the GDP-bound form has much lower affinity for SGSM1. Interacts with SGSM2. The GTP-bound form but not the GDP-bound form interacts with HPS4 and the BLOC-3 complex (heterodimer of HPS1 and HPS4) but does not interact with HPS1 alone. Interacts (GTP-bound form) with NDE1; two RAB9A-GTP molecules lie on the opposite sides of the NDE1 homodimer; the interaction leads to RAB9A-dynein motor tethering. Interacts (GTP-bound form) with NDEL1. Mg(2+) serves as cofactor.

The protein resides in the cell membrane. Its subcellular location is the endoplasmic reticulum membrane. It is found in the golgi apparatus membrane. The protein localises to the late endosome. It localises to the cytoplasmic vesicle. The protein resides in the phagosome membrane. Its subcellular location is the phagosome. It is found in the cytoplasmic vesicle membrane. The protein localises to the melanosome. The enzyme catalyses GTP + H2O = GDP + phosphate + H(+). Its activity is regulated as follows. Regulated by guanine nucleotide exchange factors (GEFs) which promote the exchange of bound GDP for free GTP. Regulated by GTPase activating proteins (GAPs) which increase the GTP hydrolysis activity. Inhibited by GDP dissociation inhibitors (GDIs). In terms of biological role, the small GTPases Rab are key regulators of intracellular membrane trafficking, from the formation of transport vesicles to their fusion with membranes. Rabs cycle between an inactive GDP-bound form and an active GTP-bound form that is able to recruit to membranes different sets of downstream effectors directly responsible for vesicle formation, movement, tethering and fusion. RAB9A is involved in the transport of proteins between the endosomes and the trans-Golgi network (TGN). Specifically uses NDE1/NDEL1 as an effector to interact with the dynein motor complex in order to control retrograde trafficking of RAB9-associated late endosomes to the TGN. Involved in the recruitment of SGSM2 to melanosomes and is required for the proper trafficking of melanogenic enzymes TYR, TYRP1 and DCT/TYRP2 to melanosomes in melanocytes. The chain is Ras-related protein Rab-9A from Rattus norvegicus (Rat).